The primary structure comprises 616 residues: Chaperone protein HscA (616 aa).

This sequence belongs to the heat shock protein 70 family.

Functionally, chaperone involved in the maturation of iron-sulfur cluster-containing proteins. Has a low intrinsic ATPase activity which is markedly stimulated by HscB. Involved in the maturation of IscU. The sequence is that of Chaperone protein HscA from Enterobacter sp. (strain 638).